The chain runs to 668 residues: Pentatricopeptide repeat-containing protein CRP1, chloroplastic (668 aa).

The N-terminal 64 residues, 1–64, are a transit peptide targeting the chloroplast; that stretch reads MPASLLPPTF…SASLTSPSPP (64 aa). 14 PPR repeats span residues 154–188, 189–226, 227–261, 262–297, 298–332, 333–367, 368–402, 403–437, 438–472, 473–507, 508–542, 543–577, 578–612, and 613–647; these read SPLL…DFLP, DLAS…RLEP, DAPL…GLTP, RSNA…EIKP, RTRA…GVAP, DEAT…GVKP, SSYV…GVRP, DRHF…GIEP, DVVT…NCPP, GTTT…GLVP, NIIT…GLKP, SPTM…GLEV, SILV…GLRP, and DVIT…GCAP.

It belongs to the PPR family. P subfamily. As to quaternary structure, component of a multisubunit complex.

The protein resides in the plastid. Its subcellular location is the chloroplast stroma. In terms of biological role, required for the translation of the chloroplast petA and petD mRNAs. Required for the processing of the petD mRNA from a polycistronic precursor. Binds with high affinity to the 5'-UTR of the chloroplastic petA transcript. Activates psaC and petA translation by binding their 5'-UTRs. The sequence is that of Pentatricopeptide repeat-containing protein CRP1, chloroplastic from Zea mays (Maize).